Reading from the N-terminus, the 715-residue chain is MKSRKRQNNMQNETREPAVLSSQETSISRISPQDPEAKFYVGVDVGTGSARACVIDQSGNMLSLAEKPIKREQLISNFITQSSREIWNAVCYCVRTVVEESGVDPERVRGIGFDATCSLVVVSATNFEEIAVGPDFTNNDQNIILWMDHRAMKETEEINSSGDKCLKYVGGQMSVEMEIPKIKWLKNNLEAGIFQDCKFFDLPDYLTFKATGKENRSFCSAVCKQGFLPVGVEGSDIGWSKEFLNSIGLSELTKNDFERLGGSLREKKNFLTAGECISPLDKKAACQLGLTEHCVVSSGIIDAYAGWVGTVAAKPESAVKGLAETENYKKDFNGAIGRLAAVAGTSTCHILLSKNPIFVHGVWGPYRDVLARGFWAAEGGQSCTGVLLDHLITTHPAFTELSHMANLAGVSKFEYLNKILETLVEKRKVRSVISLAKHLFFYGDYHGNRSPIADPNMRACIIGQSMDNSIEDLAVMYLSACEFISQQTRQIIEVMLKSGHEINAIFMSGGQCRNSLLMRLLADCTGLPIVIPRYVDAAVVFGSALLGAAASEDFDYTREKRTLKGQKSSQTKTERFNDSYSSIQKLSMEDRNSTNGFVSPHNLQLSTPSAPAKINNYSLPICTQQPLDKTSEESSKDASLTVGQESLGEGRYNGTSFLWKVMQELTGNARIVNPNEKTHPDRILLDTKYQIFLDMIETQRKYRRMVDKVEGSFSR.

A disordered region spans residues 1 to 27 (MKSRKRQNNMQNETREPAVLSSQETSI).

The protein belongs to the FGGY kinase family.

The enzyme catalyses D-ribulose + ATP = D-ribulose 5-phosphate + ADP + H(+). It participates in carbohydrate metabolism; pentose and glucuronate interconversion. Functionally, catalyzes ATP-dependent phosphorylation of D-ribulose at C-5 to form D-ribulose 5-phosphate. Postulated to function in a metabolite repair mechanism by preventing toxic accumulation of free D-ribulose formed by non-specific phosphatase activities. Alternatively, may play a role in regulating D-ribulose 5-phosphate recycling in the pentose phosphate pathway. The chain is D-ribulokinase YDR109C from Saccharomyces cerevisiae (strain ATCC 204508 / S288c) (Baker's yeast).